The sequence spans 265 residues: Deoxycytidine kinase 1 (265 aa).

30–38 contacts ATP; it reads GNIAAGKST. Residues glutamate 55, tyrosine 88, and glutamine 99 each coordinate substrate. Residue glutamate 129 is the Proton acceptor of the active site. Arginine 130 and aspartate 135 together coordinate substrate. 190-194 provides a ligand contact to ATP; sequence RVYTR. Glutamate 199 contributes to the substrate binding site. 242–244 contributes to the ATP binding site; the sequence is EDF.

This sequence belongs to the DCK/DGK family. As to quaternary structure, homodimer.

The protein resides in the nucleus. The catalysed reaction is 2'-deoxycytidine + a ribonucleoside 5'-triphosphate = dCMP + a ribonucleoside 5'-diphosphate + H(+). The enzyme catalyses 2'-deoxyguanosine + ATP = dGMP + ADP + H(+). It catalyses the reaction 2'-deoxyadenosine + ATP = dAMP + ADP + H(+). Functionally, phosphorylates the deoxyribonucleosides deoxyadenosine, deoxycytidine and deoxyguanosine with highest activity against deoxycytidine followed by deadenosine and deoxyguanosine. Shows only very minor activity against deoxyuridine and deoxythymidine. This chain is Deoxycytidine kinase 1, found in Xenopus laevis (African clawed frog).